The primary structure comprises 305 residues: Short-chain dehydrogenase/reductase VdtF (305 aa).

NADP(+)-binding residues include Leu-28 and Asn-98. Ser-192 (proton donor) is an active-site residue. NADP(+) contacts are provided by Tyr-206, Lys-210, and Thr-241. Tyr-206 (proton acceptor) is an active-site residue. Lys-210 functions as the Lowers pKa of active site Tyr in the catalytic mechanism.

Belongs to the short-chain dehydrogenases/reductases (SDR) family.

It carries out the reaction methyl 2-[(3S)-9,10-dihydroxy-7-methoxy-1-oxo-1H,3H,4H-naphtho[2,3-c]pyran-3-yl]acetate + AH2 = semiviriditoxin + A. The enzyme catalyses 9,10-dihydroxy-7-methoxy-3-(2-oxopropyl)-1H-benzo[g]isochromen-1-one + AH2 = (3S)-9,10-dihydroxy-7-methoxy-3-(2-oxopropyl)-1H,3H,4H-naphtho[2,3-c]pyran-1-one + A. Its pathway is secondary metabolite biosynthesis. Functionally, short-chain dehydrogenase/reductase; part of the gene cluster that mediates the biosynthesis of viriditoxin, one of the 'classical' secondary metabolites produced by fungi and that has antibacterial activity. The first step is performed by the polyketide synthase VdtA which condenses one acetyl-CoA and 6 malonyl-CoA units to form the heptaketide monomer backbone of viriditoxin. The product of VdtA is then O-methylated on C7 by the O-methyltransferase VdtC. The O-methyl group is important for the stereoselective coupling of the monomers at the final step of viriditoxin biosynthesis. The short-chain dehydrogenase/reductase VdtF then acts as a stereospecific reductase converting the pyrone to dihydropyrone via the reduction of the C3-C4 double bond. The FAD-binding monooxygenase VdtE then converts the ketone group into a methyl-ester group to yield semi-viriditoxin. Finally, the laccase VdtB is involved in dimerization of 2 semi-viriditoxin molecules to yield the final viriditoxin. VdtB is responsible for the regioselective 6,6'-coupling of semi-viriditoxin, which yields (M)-viriditoxin and (P)-viriditoxin at a ratio of 1:2. The non-catalytic carboxylesterase-like protein VdtD affects the stereochemistical outcome of the coupling. The highly reducing polyketide synthase VdtX is not involved in viriditoxin synthesis, but might possibly play a role in the production of additional metabolites not identified yet. This Byssochlamys spectabilis (Paecilomyces variotii) protein is Short-chain dehydrogenase/reductase VdtF.